The following is a 124-amino-acid chain: Small ribosomal subunit protein uS12 (124 aa).

Residues 11 to 20 are compositionally biased toward basic residues; sequence GRKRLKKKSK. Residues 11-30 form a disordered region; that stretch reads GRKRLKKKSKSPALENNPQK. The residue at position 89 (Asp-89) is a 3-methylthioaspartic acid. Residues 105–124 are disordered; that stretch reads EGVANRRQSRSRYGAKKPKK. The span at 111-124 shows a compositional bias: basic residues; it reads RQSRSRYGAKKPKK.

This sequence belongs to the universal ribosomal protein uS12 family. As to quaternary structure, part of the 30S ribosomal subunit. Contacts proteins S8 and S17. May interact with IF1 in the 30S initiation complex.

In terms of biological role, with S4 and S5 plays an important role in translational accuracy. Functionally, interacts with and stabilizes bases of the 16S rRNA that are involved in tRNA selection in the A site and with the mRNA backbone. Located at the interface of the 30S and 50S subunits, it traverses the body of the 30S subunit contacting proteins on the other side and probably holding the rRNA structure together. The combined cluster of proteins S8, S12 and S17 appears to hold together the shoulder and platform of the 30S subunit. This chain is Small ribosomal subunit protein uS12, found in Kosmotoga olearia (strain ATCC BAA-1733 / DSM 21960 / TBF 19.5.1).